The chain runs to 388 residues: Formate-dependent phosphoribosylglycinamide formyltransferase (388 aa).

N(1)-(5-phospho-beta-D-ribosyl)glycinamide-binding positions include 20–21 and Glu80; that span reads EL. ATP-binding positions include Arg112, Lys153, 158 to 163, 193 to 196, and Glu201; these read SSGKGQ and EEFI. In terms of domain architecture, ATP-grasp spans 117–306; sequence RLAFEKLGLR…EFEIHARAIL (190 aa). Mg(2+)-binding residues include Glu265 and Glu277. N(1)-(5-phospho-beta-D-ribosyl)glycinamide is bound by residues Asp284, Lys352, and 359–360; that span reads RR.

The protein belongs to the PurK/PurT family. In terms of assembly, homodimer.

The catalysed reaction is N(1)-(5-phospho-beta-D-ribosyl)glycinamide + formate + ATP = N(2)-formyl-N(1)-(5-phospho-beta-D-ribosyl)glycinamide + ADP + phosphate + H(+). It participates in purine metabolism; IMP biosynthesis via de novo pathway; N(2)-formyl-N(1)-(5-phospho-D-ribosyl)glycinamide from N(1)-(5-phospho-D-ribosyl)glycinamide (formate route): step 1/1. Its function is as follows. Involved in the de novo purine biosynthesis. Catalyzes the transfer of formate to 5-phospho-ribosyl-glycinamide (GAR), producing 5-phospho-ribosyl-N-formylglycinamide (FGAR). Formate is provided by PurU via hydrolysis of 10-formyl-tetrahydrofolate. This Methanococcus maripaludis (strain C7 / ATCC BAA-1331) protein is Formate-dependent phosphoribosylglycinamide formyltransferase.